We begin with the raw amino-acid sequence, 155 residues long: MKITLIAVGTKMPSWVTTGFEEYQRRFPKDMPFELIEIPAGKRGKNADIKRILEQEGKAMLAACGKGKVVTLDIPGKPWTTPQLAEQLEAWKNDGRDVCLLIGGPEGLSPECKAVAEQSWSLSPLTLPHPLVRVVVAESLYRAWSLTTNHPYHRE.

S-adenosyl-L-methionine-binding positions include Leu72, Gly103, and 122–127 (LSPLTL).

Belongs to the RNA methyltransferase RlmH family. As to quaternary structure, homodimer.

Its subcellular location is the cytoplasm. It catalyses the reaction pseudouridine(1915) in 23S rRNA + S-adenosyl-L-methionine = N(3)-methylpseudouridine(1915) in 23S rRNA + S-adenosyl-L-homocysteine + H(+). Functionally, specifically methylates the pseudouridine at position 1915 (m3Psi1915) in 23S rRNA. The sequence is that of Ribosomal RNA large subunit methyltransferase H from Haemophilus influenzae (strain PittEE).